The sequence spans 498 residues: ATP synthase subunit alpha 1 (498 aa).

It belongs to the ATPase alpha/beta chains family. In terms of assembly, F-type ATPases have 2 components, CF(1) - the catalytic core - and CF(0) - the membrane proton channel. CF(1) has five subunits: alpha(3), beta(3), gamma(1), delta(1), epsilon(1). CF(0) has three main subunits: a(1), b(2) and c(9-12). The alpha and beta chains form an alternating ring which encloses part of the gamma chain. CF(1) is attached to CF(0) by a central stalk formed by the gamma and epsilon chains, while a peripheral stalk is formed by the delta and b chains.

Its subcellular location is the cell membrane. It catalyses the reaction ATP + H2O + 4 H(+)(in) = ADP + phosphate + 5 H(+)(out). Its function is as follows. Produces ATP from ADP in the presence of a proton gradient across the membrane. The alpha chain is a regulatory subunit. The sequence is that of ATP synthase subunit alpha 1 from Listeria monocytogenes serovar 1/2a (strain ATCC BAA-679 / EGD-e).